We begin with the raw amino-acid sequence, 78 residues long: Toxin-like protein 10 (78 aa).

Residues 1-23 (MKATALLIAVFILFSVFGDMGYC) form the signal peptide.

In terms of processing, contains 4 disulfide bonds. As to expression, expressed by the venom gland.

The protein resides in the secreted. In Urodacus yaschenkoi (Inland robust scorpion), this protein is Toxin-like protein 10.